The following is a 125-amino-acid chain: MRHRNSGVKLGRTSSHRKAMFENLANSLFEHELIKTTLPKAKELRRVAEPLITLAKNDTVANRRLAFARTRNAATVGKLFTVLGPRYKERNGGYLRVLKAGFRAGDAAPMAYVELVDREVNTSAE.

It belongs to the bacterial ribosomal protein bL17 family. In terms of assembly, part of the 50S ribosomal subunit. Contacts protein L32.

This Acinetobacter baumannii (strain AB0057) protein is Large ribosomal subunit protein bL17.